The sequence spans 224 residues: Large ribosomal subunit protein uL3 (224 aa).

Gln158 is modified (N5-methylglutamine).

This sequence belongs to the universal ribosomal protein uL3 family. As to quaternary structure, part of the 50S ribosomal subunit. Forms a cluster with proteins L14 and L19. Methylated by PrmB.

In terms of biological role, one of the primary rRNA binding proteins, it binds directly near the 3'-end of the 23S rRNA, where it nucleates assembly of the 50S subunit. The chain is Large ribosomal subunit protein uL3 from Paracidovorax citrulli (strain AAC00-1) (Acidovorax citrulli).